The primary structure comprises 151 residues: Protein SprT-like (151 aa).

A SprT-like domain is found at 6–147 (LQRMVENLSE…GHCNGKLRMK (142 aa)). Zn(2+) is bound at residue His67. Glu68 is an active-site residue. His71 is a binding site for Zn(2+).

This sequence belongs to the SprT family. Zn(2+) serves as cofactor.

It is found in the cytoplasm. The sequence is that of Protein SprT-like from Staphylococcus aureus (strain MRSA252).